The chain runs to 282 residues: MKVIHTIKDLQAELSVLKAQGKKVGLVPTMGALHAGHASLVKRSVNENEVTVVSVFVNPTQFNDKNDLVKYPRTLDADCKLLEACGATYAFAPSVEEMYPEPDTRQFSYAPLDTVMEGAFRPGHFNGVCQIVSKLFEAVKPHRAYFGEKDFQQLAIIREMVRQMQFDLEIVGCPIVREEDGLALSSRNARLSAEERENALKISQTLFKSRTFAATHTVSETLKFVEDAITAVPGLRLEYFEIVDGNTLQKVDNWNQTSYVVGCITVFCGDVRLIDNIKYKES.

30 to 37 serves as a coordination point for ATP; it reads MGALHAGH. Histidine 37 acts as the Proton donor in catalysis. Glutamine 61 contributes to the (R)-pantoate binding site. Position 61 (glutamine 61) interacts with beta-alanine. 147-150 serves as a coordination point for ATP; sequence GEKD. Glutamine 153 contributes to the (R)-pantoate binding site. ATP contacts are provided by residues valine 176 and 184 to 187; that span reads LSSR.

It belongs to the pantothenate synthetase family. Homodimer.

The protein resides in the cytoplasm. The enzyme catalyses (R)-pantoate + beta-alanine + ATP = (R)-pantothenate + AMP + diphosphate + H(+). The protein operates within cofactor biosynthesis; (R)-pantothenate biosynthesis; (R)-pantothenate from (R)-pantoate and beta-alanine: step 1/1. Catalyzes the condensation of pantoate with beta-alanine in an ATP-dependent reaction via a pantoyl-adenylate intermediate. This chain is Pantothenate synthetase, found in Bacteroides fragilis (strain YCH46).